Here is a 340-residue protein sequence, read N- to C-terminus: MAIGSVVFAAAGLLLLLLPPSHQQATAGNIGSQWRDDEVHFNRTLDSILVPRVVGSRGHQQVREYLVQSLNGLGFQTEVDEFKQRVPVFGELTFANVVGTINPQAQNFLALACHYDSKYFPNDPGFVGATDSAVPCAILLNTAKTLGAYLQKEFRNRSDVGLMLIFFDGEEAFKEWTDADSVYGSKHLAAKLASKRSGSQAQLAPRNIDRIEVLVLLDLIGARNPKFSSFYENTDGLHSSLVQIEKSLRTAGQLEGNNNMFLSRVSGGLVDDDHRPFLDENVPVLHLVATPFPDVWHTPRDNAANLHWPSIRNFNRVFRNFVYQYLKRHTSPVNLRFYRT.

The N-terminal stretch at 1 to 23 (MAIGSVVFAAAGLLLLLLPPSHQ) is a signal peptide. Asn-42 carries N-linked (GlcNAc...) asparagine glycosylation. Alpha-D-mannopyranose contacts are provided by Arg-85 and Glu-91. A disulfide bridge connects residues Cys-113 and Cys-136. A Zn(2+)-binding site is contributed by Asp-131. Alpha-D-mannopyranose-binding residues include Gln-151 and Arg-155. The N-linked (GlcNAc...) asparagine glycan is linked to Asn-156. Catalysis depends on Glu-170, which acts as the Proton acceptor. Glu-171 provides a ligand contact to Zn(2+). Asp-218 acts as the Proton acceptor in catalysis. Residue His-297 coordinates Zn(2+). Leu-306 serves as a coordination point for alpha-D-mannopyranose.

It belongs to the glutaminyl-peptide cyclotransferase family.

It localises to the secreted. The catalysed reaction is N-terminal L-glutaminyl-[peptide] = N-terminal 5-oxo-L-prolyl-[peptide] + NH4(+). Its activity is regulated as follows. Inhibited by imidazoles (imidazole, benzimidazole, 1-benzylimidazole, 1-methylimidazole, P150/03, N-omega-acetylhistamine and 4-methylimidazole) and cysteamines (cysteamine, N-dimethylcysteamine and N-diethylcysteamine). Partially inhibited by PDB50 1(3,4-dimethoxyphenyl)-3-(3-imidazol-1-ylpropyl)thiourea. Functionally, acts as a glutaminyl-peptide cyclotransferase. Responsible for the biosynthesis of pyroglutamyl peptides. Might be more efficient in the conversion of tri and tetrapeptides in vitro. Might have a relative preference for substrates containing hydrophobic amino acids in vitro. This Drosophila melanogaster (Fruit fly) protein is Glutaminyl-peptide cyclotransferase.